Reading from the N-terminus, the 301-residue chain is Probable alpha-L-glutamate ligase 1 (301 aa).

One can recognise an ATP-grasp domain in the interval 104-287 (LQLLSRKGIG…VTEPIVEYIE (184 aa)). ATP-binding positions include lysine 141, 178–179 (EY), aspartate 187, and 211–213 (RSN). Positions 248, 260, and 262 each coordinate Mg(2+). Mn(2+) contacts are provided by aspartate 248, glutamate 260, and asparagine 262.

The protein belongs to the RimK family. The cofactor is Mg(2+). It depends on Mn(2+) as a cofactor.

The chain is Probable alpha-L-glutamate ligase 1 from Shewanella sp. (strain MR-4).